A 564-amino-acid chain; its full sequence is Serine/threonine-protein kinase PknA (564 aa).

The region spanning tyrosine 9–glutamine 271 is the Protein kinase domain. ATP is bound by residues leucine 15–threonine 23 and lysine 40. The active-site Proton acceptor is aspartate 139. The span at glutamine 360 to alanine 406 shows a compositional bias: polar residues. Positions glutamine 360 to proline 458 are disordered. Residues threonine 428–glutamine 445 show a composition bias toward low complexity.

Belongs to the protein kinase superfamily. Ser/Thr protein kinase family.

It carries out the reaction L-seryl-[protein] + ATP = O-phospho-L-seryl-[protein] + ADP + H(+). The enzyme catalyses L-threonyl-[protein] + ATP = O-phospho-L-threonyl-[protein] + ADP + H(+). In terms of biological role, probably required for both normal cellular growth and differentiation. Inactivation of pknA leads to colonies that appear light green and rough in the absence of combined nitrogen. This chain is Serine/threonine-protein kinase PknA (pknA), found in Nostoc sp. (strain PCC 7120 / SAG 25.82 / UTEX 2576).